Consider the following 263-residue polypeptide: Inactive adenylate kinase (263 aa).

This sequence belongs to the adenylate kinase family.

It localises to the cytoplasm. Functionally, lacks adenylate kinase activity. This Plasmodium falciparum (isolate 3D7) protein is Inactive adenylate kinase.